An 80-amino-acid polypeptide reads, in one-letter code: Small ribosomal subunit protein bS18 (80 aa).

The protein belongs to the bacterial ribosomal protein bS18 family. As to quaternary structure, part of the 30S ribosomal subunit. Forms a tight heterodimer with protein bS6.

Functionally, binds as a heterodimer with protein bS6 to the central domain of the 16S rRNA, where it helps stabilize the platform of the 30S subunit. The protein is Small ribosomal subunit protein bS18 of Clostridium perfringens (strain ATCC 13124 / DSM 756 / JCM 1290 / NCIMB 6125 / NCTC 8237 / Type A).